A 551-amino-acid chain; its full sequence is Glucans biosynthesis protein D (551 aa).

Residues 1–32 (MDRRRFIKGSMAMAAVCGTSGIASLFSQAAFA) constitute a signal peptide (tat-type signal).

Belongs to the OpgD/OpgG family. In terms of processing, predicted to be exported by the Tat system. The position of the signal peptide cleavage has not been experimentally proven.

It is found in the periplasm. It participates in glycan metabolism; osmoregulated periplasmic glucan (OPG) biosynthesis. Its function is as follows. Probably involved in the control of the structural glucose backbone of osmoregulated periplasmic glucans (OPGs). In Shigella flexneri, this protein is Glucans biosynthesis protein D (mdoD).